Here is a 459-residue protein sequence, read N- to C-terminus: E3 ubiquitin-protein ligase RNF14 (459 aa).

The 120-residue stretch at 10–129 (DELLALASIY…QFLKEETLDF (120 aa)) folds into the RWD domain. The interval 141 to 169 (SGSQPQCEPAQKHAADASGEKSKVQDLDP) is disordered. Over residues 150 to 169 (AQKHAADASGEKSKVQDLDP) the composition is skewed to basic and acidic residues. The tract at residues 200-441 (KAFCCGICYS…NPDSPCYNQL (242 aa)) is TRIAD supradomain. Positions 204, 207, 222, 224, 227, 230, 249, 254, 293, 298, 313, 316, 321, 324, 329, 334, 388, and 391 each coordinate Zn(2+). 2 RING-type zinc fingers span residues 204–249 (CGIC…CLNC) and 204–254 (CGIC…EPKC). Residues 273–334 (ARYDRLLLQS…RRSYHGLSHC (62 aa)) form an IBR-type zinc finger. Residues 388–417 (CPCCGTNIQKAHGCNKMTCSSCQKYFCWIC) form an RING-type 2; atypical zinc finger. Residue C401 is part of the active site. The Zn(2+) site is built by C406, C409, C414, C417, H429, and C437.

The protein belongs to the RBR family. RNF14 subfamily.

The protein resides in the cytoplasm. The protein localises to the nucleus. The enzyme catalyses [E2 ubiquitin-conjugating enzyme]-S-ubiquitinyl-L-cysteine + [acceptor protein]-L-lysine = [E2 ubiquitin-conjugating enzyme]-L-cysteine + [acceptor protein]-N(6)-ubiquitinyl-L-lysine.. Its pathway is protein modification; protein ubiquitination. In terms of biological role, E3 ubiquitin-protein ligase that plays a key role in the RNF14-RNF25 translation quality control pathway, a pathway that takes place when a ribosome has stalled during translation, and which promotes ubiquitination and degradation of translation factors on stalled ribosomes. Recruited to stalled ribosomes by the ribosome collision sensor GCN1 and mediates 'Lys-6'-linked ubiquitination of target proteins, leading to their degradation. Mediates ubiquitination of eef1a1/eEF1A and etf1/eRF1 translation factors on stalled ribosomes, leading to their degradation. Specifically required to resolve RNA-protein cross-links caused by reactive aldehydes, which trigger translation stress by stalling ribosomes: acts by catalying 'Lys-6'-linked ubiquitination of RNA-protein cross-links, leading to their removal by the ATP-dependent unfoldase VCP and subsequent degradation by the proteasome. Independently of its function in the response to stalled ribosomes, acts as a regulator of transcription in Wnt signaling via its interaction with TCF transcription factors (tcf7/tcf1, tcf7l1/tcf3 and tcf7l2/tcf4). This is E3 ubiquitin-protein ligase RNF14 from Danio rerio (Zebrafish).